Reading from the N-terminus, the 298-residue chain is Inosose dehydratase (298 aa).

Belongs to the IolE/MocC family. Glutathione is required as a cofactor. Requires Co(2+) as cofactor. The cofactor is Mn(2+).

The catalysed reaction is scyllo-inosose = 3D-3,5/4-trihydroxycyclohexane-1,2-dione + H2O. It participates in polyol metabolism; myo-inositol degradation into acetyl-CoA; acetyl-CoA from myo-inositol: step 2/7. Functionally, catalyzes the dehydration of inosose (2-keto-myo-inositol, 2KMI or 2,4,6/3,5-pentahydroxycyclohexanone) to 3D-(3,5/4)-trihydroxycyclohexane-1,2-dione (D-2,3-diketo-4-deoxy-epi-inositol). The polypeptide is Inosose dehydratase (Bacillus velezensis (strain DSM 23117 / BGSC 10A6 / LMG 26770 / FZB42) (Bacillus amyloliquefaciens subsp. plantarum)).